A 141-amino-acid polypeptide reads, in one-letter code: HTH-type transcriptional regulator MntR (141 aa).

One can recognise an HTH dtxR-type domain in the interval 1–63 (MPTPSMEDYI…YEKYRGLVLT (63 aa)). The Mn(2+) site is built by Asp-8, Glu-11, His-77, Glu-99, Glu-102, and His-103.

It belongs to the DtxR/MntR family. Homodimer.

Its subcellular location is the cytoplasm. Its activity is regulated as follows. DNA binding is strongly activated by Mn(2+). In terms of biological role, central regulator of manganese homeostasis. This chain is HTH-type transcriptional regulator MntR, found in Geobacillus kaustophilus (strain HTA426).